The sequence spans 322 residues: Putative UDP-N-acetylglucosamine--dolichyl-phosphate N-acetylglucosaminephosphotransferase (322 aa).

9 consecutive transmembrane segments (helical) span residues 5-25 (AILLPILISFFISYITTVWVI), 46-66 (IPLLGGIGIIAGFIAGSFSLL), 76-96 (IPAVILSSLLIAFLGLLDDIF), 102-122 (VRAFLPIFASVPLIVYSVGHS), 123-143 (IISIPFLGPINFGIFYYIIII), 160-180 (LNGLGVGMGIIMLSALAYIGL), 186-206 (TYQAGLIALSAIFSLSAFLIF), 222-242 (FIGALIGAIGIAGFMYTALAI), and 295-315 (YQVVIILWGMEAIFAVIAVIL).

It belongs to the glycosyltransferase 4 family.

It is found in the cell membrane. It catalyses the reaction a di-trans,poly-cis-dolichyl phosphate + UDP-N-acetyl-alpha-D-glucosamine = an N-acetyl-alpha-D-glucosaminyl-diphospho-di-trans,poly-cis-dolichol + UMP. With respect to regulation, inhibited by tunicamycin. The chain is Putative UDP-N-acetylglucosamine--dolichyl-phosphate N-acetylglucosaminephosphotransferase (gnpTA) from Saccharolobus solfataricus (strain ATCC 35092 / DSM 1617 / JCM 11322 / P2) (Sulfolobus solfataricus).